The chain runs to 361 residues: 5-formaminoimidazole-4-carboxamide-1-(beta)-D-ribofuranosyl 5'-monophosphate synthetase (361 aa).

5-amino-1-(5-phospho-beta-D-ribosyl)imidazole-4-carboxamide-binding residues include His27 and Ser94. Residues 116–348 (RAILRWEAER…MGQRIAREIK (233 aa)) form the ATP-grasp domain. ATP-binding positions include 146–208 (PDDI…ANYC) and Glu230. Residue Asn258 coordinates 5-amino-1-(5-phospho-beta-D-ribosyl)imidazole-4-carboxamide. Mg(2+) is bound by residues Gln297 and Glu310.

It belongs to the phosphohexose mutase family. Mg(2+) serves as cofactor. Requires Mn(2+) as cofactor.

It carries out the reaction 5-amino-1-(5-phospho-beta-D-ribosyl)imidazole-4-carboxamide + formate + ATP = 5-formamido-1-(5-phospho-D-ribosyl)imidazole-4-carboxamide + ADP + phosphate. Its pathway is purine metabolism; IMP biosynthesis via de novo pathway; 5-formamido-1-(5-phospho-D-ribosyl)imidazole-4-carboxamide from 5-amino-1-(5-phospho-D-ribosyl)imidazole-4-carboxamide (formate route): step 1/1. Catalyzes the ATP- and formate-dependent formylation of 5-aminoimidazole-4-carboxamide-1-beta-d-ribofuranosyl 5'-monophosphate (AICAR) to 5-formaminoimidazole-4-carboxamide-1-beta-d-ribofuranosyl 5'-monophosphate (FAICAR) in the absence of folates. This is 5-formaminoimidazole-4-carboxamide-1-(beta)-D-ribofuranosyl 5'-monophosphate synthetase from Methanococcus maripaludis (strain C7 / ATCC BAA-1331).